A 586-amino-acid polypeptide reads, in one-letter code: Putative ABC transporter ATP-binding protein MG187 homolog (586 aa).

The ABC transporter domain maps to 13–464; sequence IEFKNIVVDF…PANEFVATFL (452 aa). 45–52 is a binding site for ATP; it reads GPSGCGKT.

Belongs to the ABC transporter superfamily.

The sequence is that of Putative ABC transporter ATP-binding protein MG187 homolog from Mycoplasma pneumoniae (strain ATCC 29342 / M129 / Subtype 1) (Mycoplasmoides pneumoniae).